Reading from the N-terminus, the 786-residue chain is LPS-assembly protein LptD (786 aa).

Residues 1-24 form the signal peptide; sequence MSFTSRSLLASFTGCLLYGTPAIA.

It belongs to the LptD family. Component of the lipopolysaccharide transport and assembly complex. Interacts with LptE and LptA.

The protein localises to the cell outer membrane. Together with LptE, is involved in the assembly of lipopolysaccharide (LPS) at the surface of the outer membrane. The chain is LPS-assembly protein LptD from Aliivibrio fischeri (strain ATCC 700601 / ES114) (Vibrio fischeri).